The following is a 266-amino-acid chain: Large ribosomal subunit protein uL2m (266 aa).

It belongs to the universal ribosomal protein uL2 family.

Its subcellular location is the mitochondrion. This is Large ribosomal subunit protein uL2m (mrpl2) from Dictyostelium discoideum (Social amoeba).